A 303-amino-acid chain; its full sequence is Aspartate carbamoyltransferase catalytic subunit (303 aa).

Residues R49 and T50 each coordinate carbamoyl phosphate. K77 provides a ligand contact to L-aspartate. Carbamoyl phosphate-binding residues include R99, H126, and Q129. Residues R159 and R211 each contribute to the L-aspartate site. S252 and P253 together coordinate carbamoyl phosphate.

Belongs to the aspartate/ornithine carbamoyltransferase superfamily. ATCase family. In terms of assembly, heterododecamer (2C3:3R2) of six catalytic PyrB chains organized as two trimers (C3), and six regulatory PyrI chains organized as three dimers (R2).

It carries out the reaction carbamoyl phosphate + L-aspartate = N-carbamoyl-L-aspartate + phosphate + H(+). Its pathway is pyrimidine metabolism; UMP biosynthesis via de novo pathway; (S)-dihydroorotate from bicarbonate: step 2/3. Its function is as follows. Catalyzes the condensation of carbamoyl phosphate and aspartate to form carbamoyl aspartate and inorganic phosphate, the committed step in the de novo pyrimidine nucleotide biosynthesis pathway. In Listeria innocua serovar 6a (strain ATCC BAA-680 / CLIP 11262), this protein is Aspartate carbamoyltransferase catalytic subunit.